A 584-amino-acid chain; its full sequence is ATP-dependent ubiquitin transferase-like protein Cap2 (584 aa).

An E2-like domain region spans residues 1-137 (MKQELHHTLL…SGTSNDVELE (137 aa)). The For E2-like domain role is filled by Cys90. Positions 138-338 (GEFSAYWQSE…LLSRNQSRPD (201 aa)) are linker domain. An adenylation plus E1-like domain region spans residues 339–584 (VGNLSQKRIA…RFSGCNICDE (246 aa)). Cys522 serves as the catalytic For E1-like domain.

It in the C-terminal section; belongs to the HesA/MoeB/ThiF family. In terms of assembly, interacts with CD-NTase DncV in the presence and absence of phage T2. A Cap2 dimer is bound on either side by a DncV monomer.

Its function is as follows. CD-NTase priming component of a CBASS antiviral system. CBASS (cyclic oligonucleotide-based antiphage signaling system) provides immunity against bacteriophages. The CD-NTase protein (DncV) synthesizes cyclic nucleotides in response to infection; these serve as specific second messenger signals. The signals activate a diverse range of effectors, leading to bacterial cell death and thus abortive phage infection. A type II-A(GA) CBASS system. Primes DncV; acts as a protein transferase, conjugating DncV, the CD-NTase, to unidentified target(s) in the cell via an E1-E2 ubiquitin transferase-like mechanism. During the conjugation reaction DncV is probably transiently attached to AMP. Protein conjugation requires ATP. Functionally, protects E.coli against phage infection. When the CBASS operon (capV-dncV-cap2-cap3) is introduced in E.coli MG1655 there is about 100-fold protection against phages P1 and T2. When the operon is introduced in E.coli MG1655 there is a more than 10(3) decrease in the efficiency of T2 plaque formation. Protects 100-fold against phage T5, offers no protection against T7. When the operon is introduced in E.coli MG1655 it protects against phages T2, T4, T5 and T6. Another paper shows the operon confers protection against phages P1, T2, T5 and T6 but not T4 or lambda. The polypeptide is ATP-dependent ubiquitin transferase-like protein Cap2 (Vibrio cholerae serotype O1 (strain ATCC 39315 / El Tor Inaba N16961)).